A 457-amino-acid chain; its full sequence is Bifunctional protein GlmU (457 aa).

Residues 1 to 230 (MPLSLPLHIV…AREVEGVNDL (230 aa)) are pyrophosphorylase. Residues 12–15 (LAAG), Lys-26, Gln-78, 83–84 (GT), 105–107 (YGD), Gly-140, Glu-155, Asn-170, and Asn-228 each bind UDP-N-acetyl-alpha-D-glucosamine. Asp-107 is a Mg(2+) binding site. Asn-228 lines the Mg(2+) pocket. The tract at residues 231–251 (WQLTQLERAWQIRAARALCLQ) is linker. The N-acetyltransferase stretch occupies residues 252-457 (GARVADPARL…DSWQRPKKKT (206 aa)). The UDP-N-acetyl-alpha-D-glucosamine site is built by Arg-334 and Lys-352. His-364 (proton acceptor) is an active-site residue. Residues Tyr-367 and Asn-378 each coordinate UDP-N-acetyl-alpha-D-glucosamine. Acetyl-CoA contacts are provided by residues Ala-381, 387 to 388 (NY), Ser-406, Ala-424, and Arg-441.

It in the N-terminal section; belongs to the N-acetylglucosamine-1-phosphate uridyltransferase family. This sequence in the C-terminal section; belongs to the transferase hexapeptide repeat family. Homotrimer. The cofactor is Mg(2+).

It is found in the cytoplasm. The enzyme catalyses alpha-D-glucosamine 1-phosphate + acetyl-CoA = N-acetyl-alpha-D-glucosamine 1-phosphate + CoA + H(+). It carries out the reaction N-acetyl-alpha-D-glucosamine 1-phosphate + UTP + H(+) = UDP-N-acetyl-alpha-D-glucosamine + diphosphate. The protein operates within nucleotide-sugar biosynthesis; UDP-N-acetyl-alpha-D-glucosamine biosynthesis; N-acetyl-alpha-D-glucosamine 1-phosphate from alpha-D-glucosamine 6-phosphate (route II): step 2/2. It functions in the pathway nucleotide-sugar biosynthesis; UDP-N-acetyl-alpha-D-glucosamine biosynthesis; UDP-N-acetyl-alpha-D-glucosamine from N-acetyl-alpha-D-glucosamine 1-phosphate: step 1/1. Its pathway is bacterial outer membrane biogenesis; LPS lipid A biosynthesis. Functionally, catalyzes the last two sequential reactions in the de novo biosynthetic pathway for UDP-N-acetylglucosamine (UDP-GlcNAc). The C-terminal domain catalyzes the transfer of acetyl group from acetyl coenzyme A to glucosamine-1-phosphate (GlcN-1-P) to produce N-acetylglucosamine-1-phosphate (GlcNAc-1-P), which is converted into UDP-GlcNAc by the transfer of uridine 5-monophosphate (from uridine 5-triphosphate), a reaction catalyzed by the N-terminal domain. This Xylella fastidiosa (strain 9a5c) protein is Bifunctional protein GlmU.